Here is a 316-residue protein sequence, read N- to C-terminus: Transaldolase (316 aa).

Lys-132 serves as the catalytic Schiff-base intermediate with substrate.

It belongs to the transaldolase family. Type 1 subfamily.

It localises to the cytoplasm. The catalysed reaction is D-sedoheptulose 7-phosphate + D-glyceraldehyde 3-phosphate = D-erythrose 4-phosphate + beta-D-fructose 6-phosphate. It participates in carbohydrate degradation; pentose phosphate pathway; D-glyceraldehyde 3-phosphate and beta-D-fructose 6-phosphate from D-ribose 5-phosphate and D-xylulose 5-phosphate (non-oxidative stage): step 2/3. Functionally, transaldolase is important for the balance of metabolites in the pentose-phosphate pathway. The polypeptide is Transaldolase (Methylomonas aminofaciens).